The chain runs to 29 residues: Conotoxin Bu17 (29 aa).

3 disulfide bridges follow: Cys4–Cys19, Cys5–Cys25, and Cys15–Cys26. Cysteine amide is present on Cys26.

The protein belongs to the conotoxin M superfamily. In terms of tissue distribution, expressed by the venom duct.

Its subcellular location is the secreted. The protein is Conotoxin Bu17 of Conus bullatus (Bubble cone).